A 638-amino-acid chain; its full sequence is ATP-dependent rRNA helicase spb4 (638 aa).

The Q motif motif lies at W14 to A42. Residues I45–V249 form the Helicase ATP-binding domain. Position 58-65 (A58–T65) interacts with ATP. A DEAD box motif is present at residues D197–D200. In terms of domain architecture, Helicase C-terminal spans A283 to A437. Residues A521 to G629 are a coiled coil. Positions M538–D638 are disordered. A compositionally biased stretch (basic and acidic residues) spans M574–E597. The span at D625–D638 shows a compositional bias: acidic residues.

Belongs to the DEAD box helicase family. DDX55/SPB4 subfamily. As to quaternary structure, component of pre-60S ribosomal complexes.

It localises to the nucleus. The protein localises to the nucleolus. It carries out the reaction ATP + H2O = ADP + phosphate + H(+). Functionally, ATP-binding RNA helicase involved in the biogenesis of 60S ribosomal subunits. Binds 90S pre-ribosomal particles and dissociates from pre-60S ribosomal particles after processing of 27SB pre-rRNA. Required for the normal formation of 18S rRNA through the processing of pre-rRNAs at sites A0, A1 and A2, and the normal formation of 25S and 5.8S rRNAs through the processing of pre-rRNAs at sites C1 and C2. The sequence is that of ATP-dependent rRNA helicase spb4 from Emericella nidulans (strain FGSC A4 / ATCC 38163 / CBS 112.46 / NRRL 194 / M139) (Aspergillus nidulans).